The primary structure comprises 491 residues: D-xylose-proton symporter (491 aa).

Topologically, residues 1–9 are cytoplasmic; the sequence is MNTQYNSSY. A helical membrane pass occupies residues 10-30; it reads IFSITLVATLGGLLFGYDTAV. The Periplasmic portion of the chain corresponds to 31–55; sequence ISGTVESLNTVFVAPQNLSESAANS. Residues 56-76 form a helical membrane-spanning segment; it reads LLGFCVASALIGCIIGGALGG. Residues 77–89 are Cytoplasmic-facing; sequence YCSNRFGRRDSLK. A helical transmembrane segment spans residues 90–110; it reads IAAVLFFISGVGSAWPELGFT. Topologically, residues 111–133 are periplasmic; the sequence is SINPDNTVPVYLAGYVPEFVIYR. The chain crosses the membrane as a helical span at residues 134-154; it reads IIGGIGVGLASMLSPMYIAEL. The Cytoplasmic portion of the chain corresponds to 155–165; that stretch reads APAHIRGKLVS. A helical membrane pass occupies residues 166 to 186; that stretch reads FNQFAIIFGQLLVYCVNYFIA. Residue glutamine 168 coordinates beta-D-xylose. Residues 187-200 lie on the Periplasmic side of the membrane; it reads RSGDASWLNTDGWR. The helical transmembrane segment at 201 to 221 threads the bilayer; it reads YMFASECIPALLFLMLLYTVP. Over 222–272 the chain is Cytoplasmic; that stretch reads ESPRWLMSRGKQEQAEGILRKIMGNTLATQAVQEIKHSLDHGRKTGGRLLM. The helical transmembrane segment at 273-293 threads the bilayer; it reads FGVGVIVIGVMLSIFQQFVGI. Beta-D-xylose-binding positions include 288–289 and asparagine 294; that span reads QQ. Over 294–312 the chain is Periplasmic; the sequence is NVVLYYAPEVFKTLGASTD. A helical transmembrane segment spans residues 313–333; sequence IALLQTIIVGVINLTFTVLAI. The Cytoplasmic segment spans residues 334 to 343; it reads MTVDKFGRKP. The chain crosses the membrane as a helical span at residues 344 to 364; it reads LQIIGALGMAIGMFSLGTAFY. Topologically, residues 365-369 are periplasmic; that stretch reads TQAPG. A helical membrane pass occupies residues 370 to 390; that stretch reads IVALLSMLFYVAAFAMSWGPV. Topologically, residues 391–407 are cytoplasmic; the sequence is CWVLLSEIFPNAIRGKA. Beta-D-xylose contacts are provided by tryptophan 392 and glutamine 415. A helical transmembrane segment spans residues 408-428; it reads LAIAVAAQWLANYFVSWTFPM. At 429–442 the chain is on the periplasmic side; the sequence is MDKNSWLVAHFHNG. Residues 443-463 traverse the membrane as a helical segment; it reads FSYWIYGCMGVLAALFMWKFV. The Cytoplasmic portion of the chain corresponds to 464–491; it reads PETKGKTLEELEALWEPETKKTQQTATL.

Belongs to the major facilitator superfamily. Sugar transporter (TC 2.A.1.1) family.

It localises to the cell inner membrane. The enzyme catalyses D-xylose(in) + H(+)(in) = D-xylose(out) + H(+)(out). Functionally, uptake of D-xylose across the boundary membrane with the concomitant transport of protons into the cell (symport system). This Escherichia coli O157:H7 protein is D-xylose-proton symporter (xylE).